We begin with the raw amino-acid sequence, 184 residues long: Cell wall protein phiA (184 aa).

The N-terminal stretch at 1–21 is a signal peptide; that stretch reads MQLKNLIFAAATAAALPATDA. Residue Asn-58 is glycosylated (N-linked (GlcNAc...) asparagine).

It belongs to the phiA family.

The protein resides in the secreted. Its subcellular location is the cell wall. Cell wall protein involved in development of asexual structures such as phialide and conidium development, and thus required for spore formation. Plays a role as a general stress protectant produced by the fungus in competition with antagonistic bacteria. The protein is Cell wall protein phiA of Aspergillus niger (strain ATCC MYA-4892 / CBS 513.88 / FGSC A1513).